A 295-amino-acid chain; its full sequence is UDP-N-acetylenolpyruvoylglucosamine reductase (295 aa).

In terms of domain architecture, FAD-binding PCMH-type spans 23 to 188 (QVGGPADFLA…ISAKFALKPG (166 aa)). Residue R167 is part of the active site. The Proton donor role is filled by S217. E287 is a catalytic residue.

The protein belongs to the MurB family. FAD serves as cofactor.

The protein resides in the cytoplasm. The catalysed reaction is UDP-N-acetyl-alpha-D-muramate + NADP(+) = UDP-N-acetyl-3-O-(1-carboxyvinyl)-alpha-D-glucosamine + NADPH + H(+). The protein operates within cell wall biogenesis; peptidoglycan biosynthesis. Functionally, cell wall formation. The chain is UDP-N-acetylenolpyruvoylglucosamine reductase from Streptococcus equi subsp. equi (strain 4047).